The primary structure comprises 379 residues: RING finger protein 215 (379 aa).

Disordered stretches follow at residues 1-21 (MGSA…PPSP) and 44-63 (AADG…RSVR). The Cytoplasmic segment spans residues 1 to 24 (MGSADRPALRSPSLPPPPPSPPSP). A helical membrane pass occupies residues 25–45 (LLLLLPLLPLWLGLMGPGAAA). At 46–252 (DGSEPATGEG…GGAQAQEQKP (207 aa)) the chain is on the extracellular side. A glycan (N-linked (GlcNAc...) asparagine) is linked at asparagine 188. Residues 253–273 (LQQLWNAILLVAMLLCTGLVV) traverse the membrane as a helical segment. Residues 274–379 (QAQRQASRQN…NVLGNHYSDD (106 aa)) are Cytoplasmic-facing. The segment at 327 to 368 (CAVCLDYFCNKQWLRVLPCKHEFHRDCVDPWLMLQQTCPLCK) adopts an RING-type; atypical zinc-finger fold.

The protein resides in the membrane. This is RING finger protein 215 (Rnf215) from Mus musculus (Mouse).